The following is a 257-amino-acid chain: MARDSEDQDMETETNGAAEGLDPTSAVTGLPQKRFYRQRAHSNPIADHSFDYPARPEDVNWRALYPSIQPDQKVTFADIGCGYGGFLVTLGEMFPEKFSIGMEIRVKVSDYVMDRITALRHKSGEAGAYKNIACLRTNAMKYLPNYFAKGQLEKMFFLYPDPHFKRAKHKWRIINQALLSEYAYVLKKGGLVYTMTDVEDLHQWIVQHMEEHPLYERLKEEEEQSDPITPKLYQSSEEGAKVVRNKGDHFLAIFRRL.

A compositionally biased stretch (acidic residues) spans 1-12; the sequence is MARDSEDQDMET. A disordered region spans residues 1–25; sequence MARDSEDQDMETETNGAAEGLDPTS. S-adenosyl-L-methionine-binding positions include Gly80, 103-104, 138-139, and Leu158; these read EI and NA. Residue Asp161 is part of the active site. 236 to 238 lines the S-adenosyl-L-methionine pocket; that stretch reads SEE.

It belongs to the class I-like SAM-binding methyltransferase superfamily. TrmB family.

Its subcellular location is the nucleus. The catalysed reaction is guanosine(46) in tRNA + S-adenosyl-L-methionine = N(7)-methylguanosine(46) in tRNA + S-adenosyl-L-homocysteine. It functions in the pathway tRNA modification; N(7)-methylguanine-tRNA biosynthesis. In terms of biological role, catalyzes the formation of N(7)-methylguanine at position 46 (m7G46) in tRNA. In Drosophila ananassae (Fruit fly), this protein is tRNA (guanine-N(7)-)-methyltransferase.